A 141-amino-acid chain; its full sequence is Large ribosomal subunit protein uL16 (141 aa).

This sequence belongs to the universal ribosomal protein uL16 family. As to quaternary structure, part of the 50S ribosomal subunit.

Functionally, binds 23S rRNA and is also seen to make contacts with the A and possibly P site tRNAs. The sequence is that of Large ribosomal subunit protein uL16 from Campylobacter hominis (strain ATCC BAA-381 / DSM 21671 / CCUG 45161 / LMG 19568 / NCTC 13146 / CH001A).